The following is a 187-amino-acid chain: MNLKNNTDQIKRDLITGSRRLSNYWWAITIGLGSSGFILAGISSYTKINLLPFTDTTQFLFIPQGITMLLYGTIGFLLDIYLWLLILWNVGAGYNEYNKKKGTVSIFRWGFPGTNRRIEVIYPIEQIQAIKLEIKQGLNPRHSISLKIQEKNEIVITPIGYLLPISVVEEQAANLASFLNIPLDSNQ.

2 helical membrane passes run L21 to S43 and L69 to G91.

Belongs to the Ycf4 family.

It localises to the plastid. It is found in the cyanelle thylakoid membrane. Seems to be required for the assembly of the photosystem I complex. This chain is Photosystem I assembly protein Ycf4, found in Cyanophora paradoxa.